Here is a 293-residue protein sequence, read N- to C-terminus: Mitochondrial inner membrane protease atp23 (293 aa).

The disordered stretch occupies residues 1 to 51 (MSPAPTTSAGPASSGIPPSSLPTSTVTEDDTKPSSSSSKANDLLPRYLTND). Residues 8–22 (SAGPASSGIPPSSLP) show a composition bias toward low complexity. Residue H190 coordinates a divalent metal cation. E191 is a catalytic residue. H194 is an a divalent metal cation binding site.

This sequence belongs to the peptidase M76 family.

It localises to the mitochondrion inner membrane. Has a dual role in the assembly of mitochondrial ATPase. Acts as a protease that removes N-terminal residues of mitochondrial ATPase CF(0) subunit 6 at the intermembrane space side. Also involved in the correct assembly of the membrane-embedded ATPase CF(0) particle, probably mediating association of subunit 6 with the subunit 9 ring. The protein is Mitochondrial inner membrane protease atp23 (atp23) of Neurospora crassa (strain ATCC 24698 / 74-OR23-1A / CBS 708.71 / DSM 1257 / FGSC 987).